The chain runs to 423 residues: Histidine--tRNA ligase (423 aa).

The protein belongs to the class-II aminoacyl-tRNA synthetase family. As to quaternary structure, homodimer.

It localises to the cytoplasm. It carries out the reaction tRNA(His) + L-histidine + ATP = L-histidyl-tRNA(His) + AMP + diphosphate + H(+). The sequence is that of Histidine--tRNA ligase from Actinobacillus succinogenes (strain ATCC 55618 / DSM 22257 / CCUG 43843 / 130Z).